The sequence spans 191 residues: Large ribosomal subunit protein eL6 (191 aa).

Belongs to the eukaryotic ribosomal protein eL6 family.

The polypeptide is Large ribosomal subunit protein eL6 (RPL6) (Tetrahymena thermophila (strain SB210)).